The primary structure comprises 336 residues: Homeobox-leucine zipper protein HAT14 (336 aa).

Disordered regions lie at residues 53 to 141 (RSLS…PDSV) and 160 to 194 (SNKRDIDDEVERSASRASNEDNDDENGSTRKKLRL). Basic and acidic residues predominate over residues 64 to 81 (EDEKKKPAPRAKKSDEFR). The span at 120 to 129 (VEEEEEEEEA) shows a compositional bias: acidic residues. Residues 130–141 (VPSMSVSPPDSV) show a composition bias toward low complexity. Basic and acidic residues predominate over residues 160-173 (SNKRDIDDEVERSA). The segment at residues 187-246 (STRKKLRLSKDQSAFLEDSFKEHSTLNPKQKIALAKQLNLRPRQVEVWFQNRRARTKLKQ) is a DNA-binding region (homeobox). Residues 254 to 275 (LKRCCESLTEENRRLQKEVKEL) form a leucine-zipper region.

The protein belongs to the HD-ZIP homeobox family. Class II subfamily.

The protein localises to the nucleus. Functionally, probable transcription factor. This is Homeobox-leucine zipper protein HAT14 (HAT14) from Arabidopsis thaliana (Mouse-ear cress).